Here is a 232-residue protein sequence, read N- to C-terminus: 2,3-bisphosphoglycerate-dependent phosphoglycerate mutase (232 aa).

Substrate contacts are provided by residues 8-15 (RHGESLWN), 21-22 (TG), Arg-60, 87-90 (ERHY), Lys-98, 114-115 (RR), and 183-184 (GN). Residue His-9 is the Tele-phosphohistidine intermediate of the active site. The Proton donor/acceptor role is filled by Glu-87.

It belongs to the phosphoglycerate mutase family. BPG-dependent PGAM subfamily.

It catalyses the reaction (2R)-2-phosphoglycerate = (2R)-3-phosphoglycerate. It participates in carbohydrate degradation; glycolysis; pyruvate from D-glyceraldehyde 3-phosphate: step 3/5. Catalyzes the interconversion of 2-phosphoglycerate and 3-phosphoglycerate. The protein is 2,3-bisphosphoglycerate-dependent phosphoglycerate mutase of Clostridium beijerinckii (strain ATCC 51743 / NCIMB 8052) (Clostridium acetobutylicum).